A 356-amino-acid chain; its full sequence is MSSNKTEKPTKKRLEDSAKKGQSFKSKDLIIACLTLGGIAYLVSYGSFNEFMGIIKIIIADNFDQSMADYSLAVFGIGLKYLIPFMLLCLVCSALPALLQAGFVLATEALKPNLSALNPVEGAKKLFSMRTVKDTVKTLLYLSSFVVAAIICWKKYKVEIFSQLNGNIVGIAVIWRELLLALVLTCLACALIVLLLDAIAEYFLTMKDMKMDKEEVKREMKEQEGNPEVKSKRREVHMEILSEQVKSDIENSRLIVANPTHITIGIYFKPELMPIPMISVYETNQRALAVRAYAEKVGVPVIVDIKLARSLFKTHRRYDLVSLEEIDEVLRLLVWLEEVENAGKDVIQPQENEVRH.

Helical transmembrane passes span 29-49, 72-92, 132-152, 179-199, and 261-281; these read LIIACLTLGGIAYLVSYGSFN, LAVFGIGLKYLIPFMLLCLVC, VKDTVKTLLYLSSFVVAAIIC, LLALVLTCLACALIVLLLDAI, and HITIGIYFKPELMPIPMISVY.

It belongs to the type III secretion exporter family.

Its subcellular location is the cell inner membrane. Its function is as follows. Involved in a secretory pathway responsible for the surface presentation of determinants needed for the entry of Salmonella species into mammalian cells. The chain is Surface presentation of antigens protein SpaS (spaS) from Salmonella typhimurium (strain LT2 / SGSC1412 / ATCC 700720).